Reading from the N-terminus, the 291-residue chain is uncharacterized protein (291 aa).

Solcar repeat units lie at residues P15 to S93, P104 to S190, and L201 to I287. 6 consecutive transmembrane segments (helical) span residues I21–A41, S70–I90, L108–I128, T169–Q189, L201–T221, and F259–V280.

This sequence belongs to the mitochondrial carrier (TC 2.A.29) family.

It is found in the mitochondrion inner membrane. This is an uncharacterized protein from Schizosaccharomyces pombe (strain 972 / ATCC 24843) (Fission yeast).